A 248-amino-acid polypeptide reads, in one-letter code: Mannose-binding protein C (248 aa).

The first 20 residues, 1–20 (MSLFPSLPLLLLSMVAASYS), serve as a signal peptide directing secretion. One can recognise a Collagen-like domain in the interval 42-99 (GINGFPGKDGRDGTKGEKGEPGQGLRGLQGPPGKLGPPGNPGPSGSPGPKGQKGDPGK). The disordered stretch occupies residues 43–113 (INGFPGKDGR…DSSLAASERK (71 aa)). A Hydroxyproline modification is found at P47. Basic and acidic residues predominate over residues 49 to 61 (KDGRDGTKGEKGE). Residues P73, P79, P82, and P88 each carry the hydroxyproline modification. The segment covering 75-87 (KLGPPGNPGPSGS) has biased composition (pro residues). The segment covering 93–102 (QKGDPGKSPD) has biased composition (basic and acidic residues). Positions 112–130 (RKALQTEMARIKKWLTFSL) form a coiled coil. The C-type lectin domain maps to 134–245 (VGNKFFLTNG…CSTSHLAVCE (112 aa)). Intrachain disulfides connect C155–C244 and C222–C236.

As to quaternary structure, oligomeric complex of 3 or more homotrimers. Interacts with MASP1 and MASP2. Interacts with MEP1A and MEP1B and may inhibit their catalytic activity. Interacts with CR1 (via Sushi 24 and Sushi 25 domains). (Microbial infection) Interacts with SARS coronavirus-2/SARS-CoV-2 Spike glycoprotein homotrimer; the interaction is calcium-dependent and modulated by Spike glycoprotein glycosylation state. Plasma protein produced mainly in the liver.

It is found in the secreted. Calcium-dependent lectin involved in innate immune defense. Binds mannose, fucose and N-acetylglucosamine on different microorganisms and activates the lectin complement pathway. Binds to late apoptotic cells, as well as to apoptotic blebs and to necrotic cells, but not to early apoptotic cells, facilitating their uptake by macrophages. May bind DNA. Upon SARS coronavirus-2/SARS-CoV-2 infection, activates the complement lectin pathway which leads to the inhibition SARS-CoV-2 infection and a reduction of the induced inflammatory response. The chain is Mannose-binding protein C from Homo sapiens (Human).